The following is a 435-amino-acid chain: GTPase Der (435 aa).

2 EngA-type G domains span residues 4–167 (PVVA…PAEK) and 175–350 (ISFS…DNQN). GTP-binding positions include 10–17 (GQPNVGKS), 57–61 (DTGGI), 119–122 (NKAD), 181–188 (GRPNVGKS), 228–232 (DTAGI), and 293–296 (NKWD). Residues 351–435 (QRIQSSVLND…PIKILPRKRK (85 aa)) form the KH-like domain.

Belongs to the TRAFAC class TrmE-Era-EngA-EngB-Septin-like GTPase superfamily. EngA (Der) GTPase family. In terms of assembly, associates with the 50S ribosomal subunit.

Functionally, GTPase that plays an essential role in the late steps of ribosome biogenesis. This Lactobacillus acidophilus (strain ATCC 700396 / NCK56 / N2 / NCFM) protein is GTPase Der.